The following is a 255-amino-acid chain: Accessory gland-specific peptide 26Aa (255 aa).

A signal peptide spans 1 to 18 (MNLILLCSQILLLLFTVA). The segment at 86–110 (PINNSKSRKNSSTLPSQILTDKPNQ) is disordered. Over residues 87 to 110 (INNSKSRKNSSTLPSQILTDKPNQ) the composition is skewed to polar residues. Asparagine 88, asparagine 95, and asparagine 136 each carry an N-linked (GlcNAc...) asparagine glycan. Disordered regions lie at residues 177-196 (NAQN…SKDI) and 235-255 (NNPA…PSTT). Residues 183–192 (KSTKSCKKRP) are compositionally biased toward basic residues. The segment covering 245–255 (KSPSEGNPSTT) has biased composition (polar residues).

Post-translationally, it undergoes several cleavages as it is secreted and it is further processed in the recipient female. In terms of tissue distribution, main cells of the accessory glands of males.

It is found in the secreted. Its subcellular location is the extracellular space. Functionally, this protein is transferred from male to female's hemolymph during mating, affecting egglaying and behavior after mating. This is Accessory gland-specific peptide 26Aa (Acp26Aa) from Drosophila sechellia (Fruit fly).